A 365-amino-acid polypeptide reads, in one-letter code: Spore germination protein A2 (365 aa).

11 consecutive transmembrane segments (helical) span residues 12–32 (TFQG…LTLP), 45–65 (WITL…NTLI), 85–105 (WIGS…ASFE), 122–142 (PIQV…VGGL), 148–168 (LFPF…GISF), 187–207 (IANS…MLFL), 223–243 (LGFL…VGAL), 250–270 (TLIW…IFIE), 275–295 (FLLV…GYFA), 303–323 (FGLS…YFSL), and 338–358 (LGYI…IVAL).

The protein belongs to the amino acid-polyamine-organocation (APC) superfamily. Spore germination protein (SGP) (TC 2.A.3.9) family.

It localises to the cell membrane. In terms of biological role, involved in the germinative response to L-alanine. Could be an amino acid transporter. Forms a complex at the inner spore membrane which acts as a receptor for L-alanine, thus is involved in the stimulation of germination in response to alanine. Can stimulate germination in the absence of gerD and gerK gene products (fructose and glucose receptors, respectively), but the response is improved in their presence. This Bacillus subtilis (strain 168) protein is Spore germination protein A2 (gerAB).